Here is a 413-residue protein sequence, read N- to C-terminus: Protein arginine N-methyltransferase 2 (413 aa).

Residues 148 to 187 form a disordered region; it reads LDGSDTEMGDKGGSARDVPASADSAPADSAGHSSSEPTAV. Residues 162–182 show a composition bias toward low complexity; the sequence is ARDVPASADSAPADSAGHSSS. Residues 192–413 enclose the RMT2 domain; sequence TAAHQDTYLQ…HYYHPEISFQ (222 aa). S-adenosyl-L-methionine is bound by residues Tyr199, Met229, 252–257, 273–275, 300–301, and Asp321; these read FGMGII, EAH, and WQ.

This sequence belongs to the class I-like SAM-binding methyltransferase superfamily. RMT2 methyltransferase family. Monomer.

Its subcellular location is the cytoplasm. It is found in the nucleus. Functionally, S-adenosyl-L-methionine-dependent protein-arginine N-methyltransferase that methylates the delta-nitrogen atom of arginine residues to form N5-methylarginine (type IV) in target proteins. Monomethylates ribosomal protein L12. The polypeptide is Protein arginine N-methyltransferase 2 (Eremothecium gossypii (strain ATCC 10895 / CBS 109.51 / FGSC 9923 / NRRL Y-1056) (Yeast)).